A 746-amino-acid chain; its full sequence is Histone-lysine N-methyltransferase EZH2 (746 aa).

An interaction with DNMT1, DNMT3A and DNMT3B region spans residues 1–340; the sequence is MGQTGKKSEK…AKEFAAALTA (340 aa). A Phosphoserine; by PKB/AKT1 modification is found at Ser21. Positions 39–68 are interaction with EED; that stretch reads KSMFSSNRQKILERTEILNQEWKQRRIQPV. An O-linked (GlcNAc) serine glycan is attached at Ser75. A Phosphoserine modification is found at Ser76. The interval 180 to 222 is disordered; sequence QYNDDDDDDDGDDPEEREEKQKDLEDHRDDKESRPPRKFPSDK. The segment covering 182-195 has biased composition (acidic residues); the sequence is NDDDDDDDGDDPEE. The segment covering 196–222 has biased composition (basic and acidic residues); the sequence is REEKQKDLEDHRDDKESRPPRKFPSDK. The interval 329-522 is interaction with CDYL; sequence EGAKEFAAAL…SSNHVYNYQP (194 aa). Thr339 carries the post-translational modification Phosphothreonine. Residues 340–426 form a disordered region; sequence AERIKTPPKR…PIKMKPNIEP (87 aa). Residue Thr345 is modified to Phosphothreonine; by CDK1 and CDK2. Residues 345 to 357 are compositionally biased toward basic residues; sequence TPPKRPGGRRRGR. Ser363 and Ser366 each carry phosphoserine. Thr367 is subject to Phosphothreonine. The span at 374-385 shows a compositional bias: basic and acidic residues; it reads ESKDTDSDREAG. Position 487 is a phosphothreonine (Thr487). The 103-residue stretch at 503–605 folds into the CXC domain; sequence CRKIQLKKDG…SKNVSCKNCS (103 aa). Residues 612–727 form the SET domain; it reads KHLLLAPSDV…TGEELFFDYR (116 aa). A Glycyl lysine isopeptide (Lys-Gly) (interchain with G-Cter in SUMO2) cross-link involves residue Lys634.

It belongs to the class V-like SAM-binding methyltransferase superfamily. Histone-lysine methyltransferase family. EZ subfamily. As to quaternary structure, component of the PRC2/EED-EZH2 complex, which includes EED, EZH2, SUZ12, RBBP4 and RBBP7 and possibly AEBP2. The minimum components required for methyltransferase activity of the PRC2/EED-EZH2 complex are EED, EZH2 and SUZ12. The PRC2 complex may also interact with DNMT1, DNMT3A, DNMT3B and PHF1 via the EZH2 subunit and with SIRT1 via the SUZ12 subunit. Interacts with HDAC1 and HDAC2. Binds ATRX via the SET domain. Interacts with PRAME. Interacts with CDYL. Interacts with CLOCK, BMAL1 and CRY1. Interacts with DNMT3L; the interaction is direct. Interacts with EZHIP; the interaction blocks EZH2 methyltransferase activity. Interacts with ZNF263; recruited to the SIX3 promoter along with other proteins involved in chromatin modification and transcriptional corepression where it contributes to transcriptional repression. Interacts with ARMC12. Interacts with ZMYND8; the interaction is dependent on the presence of chromatin. Interacts with DDX18; this interaction inhibits the PRC2 complex. In terms of processing, phosphorylated by AKT1. Phosphorylation by AKT1 reduces methyltransferase activity. Phosphorylation at Thr-345 by CDK1 and CDK2 promotes maintenance of H3K27me3 levels at EZH2-target loci, thus leading to epigenetic gene silencing. Sumoylated. Post-translationally, glycosylated: O-GlcNAcylation at Ser-75 by OGT increases stability of EZH2 and facilitates the formation of H3K27me3 by the PRC2/EED-EZH2 complex. In the ovary, expressed in primordial follicles and oocytes and also in external follicle cells (at protein level). Expressed in many tissues. Overexpressed in numerous tumor types including carcinomas of the breast, colon, larynx, lymphoma and testis.

Its subcellular location is the nucleus. The enzyme catalyses L-lysyl(27)-[histone H3] + 3 S-adenosyl-L-methionine = N(6),N(6),N(6)-trimethyl-L-lysyl(27)-[histone H3] + 3 S-adenosyl-L-homocysteine + 3 H(+). In terms of biological role, polycomb group (PcG) protein. Catalytic subunit of the PRC2/EED-EZH2 complex, which methylates 'Lys-9' (H3K9me) and 'Lys-27' (H3K27me) of histone H3, leading to transcriptional repression of the affected target gene. Able to mono-, di- and trimethylate 'Lys-27' of histone H3 to form H3K27me1, H3K27me2 and H3K27me3, respectively. Displays a preference for substrates with less methylation, loses activity when progressively more methyl groups are incorporated into H3K27, H3K27me0 &gt; H3K27me1 &gt; H3K27me2. Compared to EZH1-containing complexes, it is more abundant in embryonic stem cells and plays a major role in forming H3K27me3, which is required for embryonic stem cell identity and proper differentiation. The PRC2/EED-EZH2 complex may also serve as a recruiting platform for DNA methyltransferases, thereby linking two epigenetic repression systems. Genes repressed by the PRC2/EED-EZH2 complex include HOXC8, HOXA9, MYT1, CDKN2A and retinoic acid target genes. EZH2 can also methylate non-histone proteins such as the transcription factor GATA4 and the nuclear receptor RORA. Regulates the circadian clock via histone methylation at the promoter of the circadian genes. Essential for the CRY1/2-mediated repression of the transcriptional activation of PER1/2 by the CLOCK-BMAL1 heterodimer; involved in the di and trimethylation of 'Lys-27' of histone H3 on PER1/2 promoters which is necessary for the CRY1/2 proteins to inhibit transcription. The protein is Histone-lysine N-methyltransferase EZH2 of Homo sapiens (Human).